A 202-amino-acid chain; its full sequence is Osteoclast-stimulating factor 1 (202 aa).

The SH3 domain occupies 12–71; that stretch reads GQVKVFRALYTFEPRTPDELYFEEGDIIYISDMSDTNWWKGTCKGRTGLIPSNYVAEQAE. 3 ANK repeats span residues 72 to 101, 105 to 135, and 139 to 168; these read SIDNPLHEAAKRGNLSWLRECLDNQVGVNG, AGNTALYWACHGGHKDIVDVLFTQANLELNQ, and LGDTALHAAAWKGYADIVEMLLAKGARTDL.

Its subcellular location is the cytoplasm. In terms of biological role, induces bone resorption, acting probably through a signaling cascade which results in the secretion of factor(s) enhancing osteoclast formation and activity. The chain is Osteoclast-stimulating factor 1 (OSTF1) from Gallus gallus (Chicken).